Reading from the N-terminus, the 381-residue chain is MTLQENELIKIRRDLHQIPEIGLEEYETSDYLLKIINGLPQENLEIKRWKTAILVHLNGENKNYTIGYRTDIDGLPVEEKTGLPFSSKHEGRMHACGHDIHMTVALGVLSYFASHRPKYNMTFIFQPAEENASGGMKLYQSGELDEWMPDEIYALHDNPQLPAGTIGCRKGTLFAGTCEIHVKFIGKSGHAAYPHQANDMVVAGAQFVNQIQTIVSRNVDPIQSVVVTLGHFSAGTTGNVISGVCQIDGTIRALTQENNLLIQKRVRTIAEGIAHSFDCELEIDLHQGGYYPVENDDNTTEAFINYMKNEDDVDFVETLPAMTGEDFGYLISKIPGTMFWLGVDSPYSLHSEYLAPKEESIMLGVNAITGYLKNRQESLNK.

Residue D71 is part of the active site. Residue E130 is the Proton acceptor of the active site.

Belongs to the peptidase M20A family. N-acetyldiaminopimelate deacetylase subfamily.

The enzyme catalyses N-acetyl-(2S,6S)-2,6-diaminopimelate + H2O = (2S,6S)-2,6-diaminopimelate + acetate. Its pathway is amino-acid biosynthesis; L-lysine biosynthesis via DAP pathway; LL-2,6-diaminopimelate from (S)-tetrahydrodipicolinate (acetylase route): step 3/3. Its function is as follows. Catalyzes the conversion of N-acetyl-diaminopimelate to diaminopimelate and acetate. The sequence is that of N-acetyldiaminopimelate deacetylase from Ligilactobacillus salivarius (strain UCC118) (Lactobacillus salivarius).